The sequence spans 237 residues: Small ribosomal subunit protein eS4 (237 aa).

In terms of domain architecture, S4 RNA-binding spans 37-99; sequence VPLLIVLRDV…REEYYRIFPD (63 aa).

The protein belongs to the eukaryotic ribosomal protein eS4 family.

The polypeptide is Small ribosomal subunit protein eS4 (Natronomonas pharaonis (strain ATCC 35678 / DSM 2160 / CIP 103997 / JCM 8858 / NBRC 14720 / NCIMB 2260 / Gabara) (Halobacterium pharaonis)).